The chain runs to 869 residues: MPTNLPALPMDTTPELLLAARVRDQLKADKQALFADFDLSSHVGTLVTRLRRAVDAALAEAWRGLDMPADAALVAVGGYGRGELFPYSDVDVLLLLRAEPDADTVSRLERFIGMCWDLGLEIGSSVRTVEDCIREARADITIQTSLLEARLLTGNRKLFEALRTQHQADLDPAAFFQAKLLEMRQRHAKYQDTPYALEPNCKESPGGLRDLQVILWMTKAAGLGDSWKELFERGLLTQREAQELSRNERLLKTIRARLHLVAGRRQDVLVFDLQTALAESFGYRQNANKRASEQLMRRYFWAAKAVTQLNSVLLLNIEALLFPSESQVTRVINERFVERQGMLEITSDSLYEDDPHAILETFLLYERTPGIKGLSPRTLRGLYNARTVMDARWRSDPENRRLFLAILQEPQGITHALRLMNQTSVLGRYLINFRRIVGQMQHDLFHVYTVDQHILMVVRNMRRFAIVEHTHEFPFCSQLMASFDKPWVLSVAALFHDIAKGRGGDHSKLGTVDARRFCKQHGIGREDADLICWLVEHHLTMSHVAQKQDLTDPDVVHAFARVVGDERHLTALYLLTVADVRGTSPKVWNAWKGKLLEDLYRITLRVLGGARVDPHSIWAQRQEETISQLRLKAFDPELGKPLWAQLDVAFFLRHDSRDIAWLTRHLFNKVDSPVPVVKARISPAGEGLQVAVYVKDQPDLFARICGYFERKAFSIQDAKIHTTRHGYALDTFQVTDPGLADDGGNYRDILALVEHELGDRLQQQAALPEPSQGRLSRQSRSFPIKPRVDLRPDERGQYYLLSLSANDRTGLLYAITRVLAKHRVSVHTARINTLGERVEDVFLVDGSRLAADNRLQIQLEQDLLAALEI.

The uridylyltransferase stretch occupies residues 1–331 (MPTNLPALPM…FPSESQVTRV (331 aa)). The tract at residues 332-688 (INERFVERQG…ARISPAGEGL (357 aa)) is uridylyl-removing. In terms of domain architecture, HD spans 450–572 (VDQHILMVVR…VGDERHLTAL (123 aa)). ACT domains are found at residues 689 to 773 (QVAV…PSQG) and 800 to 869 (LLSL…ALEI).

It belongs to the GlnD family. The cofactor is Mg(2+).

The enzyme catalyses [protein-PII]-L-tyrosine + UTP = [protein-PII]-uridylyl-L-tyrosine + diphosphate. It carries out the reaction [protein-PII]-uridylyl-L-tyrosine + H2O = [protein-PII]-L-tyrosine + UMP + H(+). Its activity is regulated as follows. Uridylyltransferase (UTase) activity is inhibited by glutamine, while glutamine activates uridylyl-removing (UR) activity. Modifies, by uridylylation and deuridylylation, the PII regulatory proteins (GlnB and homologs), in response to the nitrogen status of the cell that GlnD senses through the glutamine level. Under low glutamine levels, catalyzes the conversion of the PII proteins and UTP to PII-UMP and PPi, while under higher glutamine levels, GlnD hydrolyzes PII-UMP to PII and UMP (deuridylylation). Thus, controls uridylylation state and activity of the PII proteins, and plays an important role in the regulation of nitrogen assimilation and metabolism. This is Bifunctional uridylyltransferase/uridylyl-removing enzyme from Cupriavidus pinatubonensis (strain JMP 134 / LMG 1197) (Cupriavidus necator (strain JMP 134)).